The sequence spans 489 residues: UDP-N-acetylmuramate--L-alanine ligase (489 aa).

Residue 130 to 136 (GTHGKTS) coordinates ATP.

It belongs to the MurCDEF family.

It is found in the cytoplasm. The catalysed reaction is UDP-N-acetyl-alpha-D-muramate + L-alanine + ATP = UDP-N-acetyl-alpha-D-muramoyl-L-alanine + ADP + phosphate + H(+). It functions in the pathway cell wall biogenesis; peptidoglycan biosynthesis. Functionally, cell wall formation. The sequence is that of UDP-N-acetylmuramate--L-alanine ligase from Corynebacterium efficiens (strain DSM 44549 / YS-314 / AJ 12310 / JCM 11189 / NBRC 100395).